A 309-amino-acid polypeptide reads, in one-letter code: tRNA uridine(34) hydroxylase (309 aa).

The Rhodanese domain occupies 126 to 220; the sequence is SDPEVIVIDT…YLEQIPPEES (95 aa). Cys180 functions as the Cysteine persulfide intermediate in the catalytic mechanism.

It belongs to the TrhO family.

The enzyme catalyses uridine(34) in tRNA + AH2 + O2 = 5-hydroxyuridine(34) in tRNA + A + H2O. Catalyzes oxygen-dependent 5-hydroxyuridine (ho5U) modification at position 34 in tRNAs. The polypeptide is tRNA uridine(34) hydroxylase (Nostoc sp. (strain PCC 7120 / SAG 25.82 / UTEX 2576)).